A 453-amino-acid polypeptide reads, in one-letter code: Bifunctional protein GlmU (453 aa).

Positions 1–226 (MKFSAVILAA…PIEVEGVNDR (226 aa)) are pyrophosphorylase. UDP-N-acetyl-alpha-D-glucosamine is bound by residues 8–11 (LAAG), Lys-22, Gln-73, 78–79 (GT), 100–102 (YGD), Gly-137, Glu-151, Asn-166, and Asn-224. Asp-102 contacts Mg(2+). Position 224 (Asn-224) interacts with Mg(2+). Positions 227–247 (AQLARLERAFQAAQAKKLLEQ) are linker. The tract at residues 248-453 (GVMLRDPARF…TGWQRPVKKK (206 aa)) is N-acetyltransferase. Residues Arg-330 and Lys-348 each contribute to the UDP-N-acetyl-alpha-D-glucosamine site. His-360 (proton acceptor) is an active-site residue. 2 residues coordinate UDP-N-acetyl-alpha-D-glucosamine: Tyr-363 and Asn-374. Residues Ala-377, 383-384 (NY), Ser-402, Ala-420, and Arg-437 each bind acetyl-CoA.

In the N-terminal section; belongs to the N-acetylglucosamine-1-phosphate uridyltransferase family. This sequence in the C-terminal section; belongs to the transferase hexapeptide repeat family. In terms of assembly, homotrimer. The cofactor is Mg(2+).

It localises to the cytoplasm. The enzyme catalyses alpha-D-glucosamine 1-phosphate + acetyl-CoA = N-acetyl-alpha-D-glucosamine 1-phosphate + CoA + H(+). The catalysed reaction is N-acetyl-alpha-D-glucosamine 1-phosphate + UTP + H(+) = UDP-N-acetyl-alpha-D-glucosamine + diphosphate. Its pathway is nucleotide-sugar biosynthesis; UDP-N-acetyl-alpha-D-glucosamine biosynthesis; N-acetyl-alpha-D-glucosamine 1-phosphate from alpha-D-glucosamine 6-phosphate (route II): step 2/2. It participates in nucleotide-sugar biosynthesis; UDP-N-acetyl-alpha-D-glucosamine biosynthesis; UDP-N-acetyl-alpha-D-glucosamine from N-acetyl-alpha-D-glucosamine 1-phosphate: step 1/1. The protein operates within bacterial outer membrane biogenesis; LPS lipid A biosynthesis. Catalyzes the last two sequential reactions in the de novo biosynthetic pathway for UDP-N-acetylglucosamine (UDP-GlcNAc). The C-terminal domain catalyzes the transfer of acetyl group from acetyl coenzyme A to glucosamine-1-phosphate (GlcN-1-P) to produce N-acetylglucosamine-1-phosphate (GlcNAc-1-P), which is converted into UDP-GlcNAc by the transfer of uridine 5-monophosphate (from uridine 5-triphosphate), a reaction catalyzed by the N-terminal domain. This is Bifunctional protein GlmU from Vibrio vulnificus (strain YJ016).